The following is a 419-amino-acid chain: Innexin inx5 (419 aa).

Topologically, residues 1 to 21 are cytoplasmic; that stretch reads MFSAVKPLSKYLQFKSIRIYD. Residues 22–42 form a helical membrane-spanning segment; sequence SVFTIHSRCTVVILLTCSLLL. Over 43–162 the chain is Extracellular; the sequence is SARQYFGDPI…QTERQYLRYY (120 aa). The chain crosses the membrane as a helical span at residues 163–183; it reads QWVIILLLFQSFVFYFPSCLW. Residues 184 to 238 are Cytoplasmic-facing; it reads KVWEGRRLKQLCSEVGDALLSEETYNTRLRMLVKYFTTDYEDMHFCYMAKYVFCE. Residues 239–259 form a helical membrane-spanning segment; that stretch reads VLNFLISVVNIIVLEVFLNGF. Topologically, residues 260-320 are extracellular; sequence WSKYLRALAT…ILPLNILNEK (61 aa). A helical transmembrane segment spans residues 321 to 341; it reads IFVFLWAWFLLMALMSGLNLL. Over 342–419 the chain is Cytoplasmic; sequence CRLAMICSRY…ASGSTLESPV (78 aa).

The protein belongs to the pannexin family. Expressed in the cortex of the pupal CNS and at low levels in the wing imaginal disk.

Its subcellular location is the cell membrane. The protein resides in the cell junction. The protein localises to the gap junction. In terms of biological role, structural component of the gap junctions. The chain is Innexin inx5 (Inx5) from Drosophila melanogaster (Fruit fly).